Here is an 83-residue protein sequence, read N- to C-terminus: Large ribosomal subunit protein bL31B (83 aa).

It belongs to the bacterial ribosomal protein bL31 family. Type B subfamily. In terms of assembly, part of the 50S ribosomal subunit.

The chain is Large ribosomal subunit protein bL31B from Tropheryma whipplei (strain TW08/27) (Whipple's bacillus).